The chain runs to 113 residues: CRISPR-associated endoribonuclease Cas2 2 (113 aa).

Aspartate 32 serves as a coordination point for Mg(2+).

This sequence belongs to the CRISPR-associated endoribonuclease Cas2 protein family. Homodimer, forms a heterotetramer with a Cas1 homodimer. It depends on Mg(2+) as a cofactor.

Functionally, CRISPR (clustered regularly interspaced short palindromic repeat), is an adaptive immune system that provides protection against mobile genetic elements (viruses, transposable elements and conjugative plasmids). CRISPR clusters contain sequences complementary to antecedent mobile elements and target invading nucleic acids. CRISPR clusters are transcribed and processed into CRISPR RNA (crRNA). Functions as a ssRNA-specific endoribonuclease. Involved in the integration of spacer DNA into the CRISPR cassette. This Nitrosomonas europaea (strain ATCC 19718 / CIP 103999 / KCTC 2705 / NBRC 14298) protein is CRISPR-associated endoribonuclease Cas2 2 (cas22).